We begin with the raw amino-acid sequence, 334 residues long: Glycerol-3-phosphate dehydrogenase [NAD(P)+] (334 aa).

NADPH is bound by residues serine 11, tryptophan 12, arginine 32, and lysine 106. 2 residues coordinate sn-glycerol 3-phosphate: lysine 106 and glycine 136. Position 140 (alanine 140) interacts with NADPH. The sn-glycerol 3-phosphate site is built by lysine 191, aspartate 244, serine 254, arginine 255, and asparagine 256. Lysine 191 acts as the Proton acceptor in catalysis. An NADPH-binding site is contributed by arginine 255. Residues valine 279 and glutamate 281 each contribute to the NADPH site.

It belongs to the NAD-dependent glycerol-3-phosphate dehydrogenase family.

It is found in the cytoplasm. It catalyses the reaction sn-glycerol 3-phosphate + NAD(+) = dihydroxyacetone phosphate + NADH + H(+). It carries out the reaction sn-glycerol 3-phosphate + NADP(+) = dihydroxyacetone phosphate + NADPH + H(+). It participates in membrane lipid metabolism; glycerophospholipid metabolism. In terms of biological role, catalyzes the reduction of the glycolytic intermediate dihydroxyacetone phosphate (DHAP) to sn-glycerol 3-phosphate (G3P), the key precursor for phospholipid synthesis. This Parafrankia sp. (strain EAN1pec) protein is Glycerol-3-phosphate dehydrogenase [NAD(P)+].